We begin with the raw amino-acid sequence, 205 residues long: Holliday junction branch migration complex subunit RuvA (205 aa).

The domain I stretch occupies residues 1–65; it reads MIAKLKGILD…EDRIHLFGFL (65 aa). The tract at residues 66-144 is domain II; sequence DNTEKVAFNM…NINTIANNTS (79 aa). Residues 145-153 are flexible linker; the sequence is LAILSTDSN. Positions 154 to 205 are domain III; sequence THDNILSDAITALIALGISRAEATQILSDIYALFPSISVNELVRTALQRRAK.

Belongs to the RuvA family. Homotetramer. Forms an RuvA(8)-RuvB(12)-Holliday junction (HJ) complex. HJ DNA is sandwiched between 2 RuvA tetramers; dsDNA enters through RuvA and exits via RuvB. An RuvB hexamer assembles on each DNA strand where it exits the tetramer. Each RuvB hexamer is contacted by two RuvA subunits (via domain III) on 2 adjacent RuvB subunits; this complex drives branch migration. In the full resolvosome a probable DNA-RuvA(4)-RuvB(12)-RuvC(2) complex forms which resolves the HJ.

The protein resides in the cytoplasm. Its function is as follows. The RuvA-RuvB-RuvC complex processes Holliday junction (HJ) DNA during genetic recombination and DNA repair, while the RuvA-RuvB complex plays an important role in the rescue of blocked DNA replication forks via replication fork reversal (RFR). RuvA specifically binds to HJ cruciform DNA, conferring on it an open structure. The RuvB hexamer acts as an ATP-dependent pump, pulling dsDNA into and through the RuvAB complex. HJ branch migration allows RuvC to scan DNA until it finds its consensus sequence, where it cleaves and resolves the cruciform DNA. This chain is Holliday junction branch migration complex subunit RuvA, found in Orientia tsutsugamushi (strain Boryong) (Rickettsia tsutsugamushi).